The following is a 390-amino-acid chain: Alkanesulfonate monooxygenase 1 (390 aa).

The disordered stretch occupies residues 364–390 (TGSSVNTGPFGETIAGDHRPKSLASAS).

It belongs to the SsuD family.

The enzyme catalyses an alkanesulfonate + FMNH2 + O2 = an aldehyde + FMN + sulfite + H2O + 2 H(+). Its function is as follows. Catalyzes the desulfonation of aliphatic sulfonates. The sequence is that of Alkanesulfonate monooxygenase 1 (ssuD1) from Mesorhizobium japonicum (strain LMG 29417 / CECT 9101 / MAFF 303099) (Mesorhizobium loti (strain MAFF 303099)).